A 306-amino-acid chain; its full sequence is Homoserine kinase (306 aa).

88 to 98 is a binding site for ATP; the sequence is PLARGLGSSAT.

It belongs to the GHMP kinase family. Homoserine kinase subfamily.

It localises to the cytoplasm. The catalysed reaction is L-homoserine + ATP = O-phospho-L-homoserine + ADP + H(+). It participates in amino-acid biosynthesis; L-threonine biosynthesis; L-threonine from L-aspartate: step 4/5. In terms of biological role, catalyzes the ATP-dependent phosphorylation of L-homoserine to L-homoserine phosphate. In Synechococcus sp. (strain ATCC 27144 / PCC 6301 / SAUG 1402/1) (Anacystis nidulans), this protein is Homoserine kinase.